We begin with the raw amino-acid sequence, 346 residues long: MASLGGDNSQAEGAEVRHVPVLIAEVIDALKPAPGAVIVDGTFGAGGYTRRILETGADVIAIDRDPTAIEAGRAMEKEFPGRLNLVESRFSALDEAVARMSGAGKKVDGVVLDIGVSSMQIDEAERGFSFQKDGPLDMRMSSGGPSAADAVNRLKTGDLARIFNFLGEERHAGRIARMIEKRRAAKPFTRTLDLANAIETLVGRNPKDRIHPATRVFQALRVYVNDELGELARALLAAERILKPGGRLVVVTFHSLEDRMVKRFFADRAGGSAGSRHMPETHMRLPSFTPAVKGAVGPTPEEEERNPRARSAKLRAGIRTENPPLEDDLSLFGLPKLPETNELARS.

Residues 46-48 (GGY), D63, F90, D113, and Q120 each bind S-adenosyl-L-methionine. Residues 270-346 (GGSAGSRHMP…LPETNELARS (77 aa)) are disordered.

This sequence belongs to the methyltransferase superfamily. RsmH family.

Its subcellular location is the cytoplasm. The catalysed reaction is cytidine(1402) in 16S rRNA + S-adenosyl-L-methionine = N(4)-methylcytidine(1402) in 16S rRNA + S-adenosyl-L-homocysteine + H(+). Its function is as follows. Specifically methylates the N4 position of cytidine in position 1402 (C1402) of 16S rRNA. This is Ribosomal RNA small subunit methyltransferase H from Brucella suis (strain ATCC 23445 / NCTC 10510).